Here is a 147-residue protein sequence, read N- to C-terminus: Effector TSP1 (147 aa).

Positions 1 to 19 (MQITKTLVATLFAASTAFA) are cleaved as a signal peptide. 2 disulfide bridges follow: C44–C51 and C67–C87.

Homodimer.

It is found in the secreted. Its function is as follows. Stimulates salicylic acid signaling in host plant roots. The sequence is that of Effector TSP1 from Hypocrea virens (strain Gv29-8 / FGSC 10586) (Gliocladium virens).